The primary structure comprises 157 residues: Peptide methionine sulfoxide reductase MsrA (157 aa).

The active site involves Cys13.

It belongs to the MsrA Met sulfoxide reductase family.

The enzyme catalyses L-methionyl-[protein] + [thioredoxin]-disulfide + H2O = L-methionyl-(S)-S-oxide-[protein] + [thioredoxin]-dithiol. It carries out the reaction [thioredoxin]-disulfide + L-methionine + H2O = L-methionine (S)-S-oxide + [thioredoxin]-dithiol. Has an important function as a repair enzyme for proteins that have been inactivated by oxidation. Catalyzes the reversible oxidation-reduction of methionine sulfoxide in proteins to methionine. This Methanococcus maripaludis (strain C5 / ATCC BAA-1333) protein is Peptide methionine sulfoxide reductase MsrA.